The sequence spans 479 residues: Cardiolipin synthase A (479 aa).

2 helical membrane-spanning segments follow: residues 8–28 (FFGY…LHAV) and 38–58 (IAWA…YLVF). PLD phosphodiesterase domains lie at 218–245 (VNFR…GDEY) and 392–419 (QPGF…DNRS). Catalysis depends on residues histidine 223, lysine 225, aspartate 230, histidine 397, lysine 399, and aspartate 404.

This sequence belongs to the phospholipase D family. Cardiolipin synthase subfamily. ClsA sub-subfamily.

It localises to the cell inner membrane. It catalyses the reaction 2 a 1,2-diacyl-sn-glycero-3-phospho-(1'-sn-glycerol) = a cardiolipin + glycerol. Its function is as follows. Catalyzes the reversible phosphatidyl group transfer from one phosphatidylglycerol molecule to another to form cardiolipin (CL) (diphosphatidylglycerol) and glycerol. The protein is Cardiolipin synthase A of Pseudomonas putida (strain GB-1).